The sequence spans 277 residues: Ribosomal RNA small subunit methyltransferase A (277 aa).

Residues N18, L20, G45, E66, D89, and N110 each contribute to the S-adenosyl-L-methionine site.

It belongs to the class I-like SAM-binding methyltransferase superfamily. rRNA adenine N(6)-methyltransferase family. RsmA subfamily.

Its subcellular location is the cytoplasm. It catalyses the reaction adenosine(1518)/adenosine(1519) in 16S rRNA + 4 S-adenosyl-L-methionine = N(6)-dimethyladenosine(1518)/N(6)-dimethyladenosine(1519) in 16S rRNA + 4 S-adenosyl-L-homocysteine + 4 H(+). Functionally, specifically dimethylates two adjacent adenosines (A1518 and A1519) in the loop of a conserved hairpin near the 3'-end of 16S rRNA in the 30S particle. May play a critical role in biogenesis of 30S subunits. The sequence is that of Ribosomal RNA small subunit methyltransferase A from Cupriavidus taiwanensis (strain DSM 17343 / BCRC 17206 / CCUG 44338 / CIP 107171 / LMG 19424 / R1) (Ralstonia taiwanensis (strain LMG 19424)).